The sequence spans 387 residues: Polyadenylate-binding protein RBP45A (387 aa).

3 consecutive RRM domains span residues 60–140 (KSLW…WAQA), 154–233 (HTIF…PAAN), and 260–332 (TTIF…WGRS). Over residues 329–342 (WGRSPNKQSDQAQW) the composition is skewed to polar residues. The segment at 329–387 (WGRSPNKQSDQAQWNGGGYYGYPPQPQGGYGYAAQPPTQDPNAYYGGYTGYGNYQQQRQ) is disordered.

This sequence belongs to the polyadenylate-binding RBP45 family. Interacts with the poly(A) tail of mRNA in nucleus. Mostly expressed in seedlings, and, to a lower extent, in leaves, stems, and flowers. Present in immature anther tissues (tapetum cells) and mature pollen grains.

It localises to the nucleus. Its function is as follows. Heterogeneous nuclear ribonucleoprotein (hnRNP)-protein binding the poly(A) tail of mRNA and probably involved in some steps of pre-mRNA maturation. The polypeptide is Polyadenylate-binding protein RBP45A (RBP45A) (Arabidopsis thaliana (Mouse-ear cress)).